A 274-amino-acid chain; its full sequence is tRNA-cytidine(32) 2-sulfurtransferase (274 aa).

A PP-loop motif motif is present at residues 40–45; that stretch reads SGGKDS. The [4Fe-4S] cluster site is built by cysteine 115, cysteine 118, and cysteine 206.

Belongs to the TtcA family. In terms of assembly, homodimer. Requires Mg(2+) as cofactor. [4Fe-4S] cluster is required as a cofactor.

It localises to the cytoplasm. It catalyses the reaction cytidine(32) in tRNA + S-sulfanyl-L-cysteinyl-[cysteine desulfurase] + AH2 + ATP = 2-thiocytidine(32) in tRNA + L-cysteinyl-[cysteine desulfurase] + A + AMP + diphosphate + H(+). The protein operates within tRNA modification. In terms of biological role, catalyzes the ATP-dependent 2-thiolation of cytidine in position 32 of tRNA, to form 2-thiocytidine (s(2)C32). The sulfur atoms are provided by the cysteine/cysteine desulfurase (IscS) system. The protein is tRNA-cytidine(32) 2-sulfurtransferase of Pseudomonas syringae pv. tomato (strain ATCC BAA-871 / DC3000).